A 523-amino-acid chain; its full sequence is Cytochrome P450 52-N1 (523 aa).

The helical transmembrane segment at 5-25 (AVLGAFAAFLLYMDVLYPFVI) threads the bilayer. Cysteine 469 is a heme binding site.

This sequence belongs to the cytochrome P450 family. Heme serves as cofactor.

It localises to the membrane. The enzyme catalyses an omega-methyl-long-chain fatty acid + reduced [NADPH--hemoprotein reductase] + O2 = an omega-hydroxy-long-chain fatty acid + oxidized [NADPH--hemoprotein reductase] + H2O + H(+). It carries out the reaction (9Z,12Z)-octadecadienoate + reduced [NADPH--hemoprotein reductase] + O2 = 18-hydroxy-(9Z,12Z)-octadecadienoate + oxidized [NADPH--hemoprotein reductase] + H2O + H(+). The catalysed reaction is (9Z)-octadecenoate + reduced [NADPH--hemoprotein reductase] + O2 = 18-hydroxy-(9Z)-octadecenoate + oxidized [NADPH--hemoprotein reductase] + H2O + H(+). It catalyses the reaction hexadecanoate + reduced [NADPH--hemoprotein reductase] + O2 = 16-hydroxyhexadecanoate + oxidized [NADPH--hemoprotein reductase] + H2O + H(+). The enzyme catalyses (9Z)-hexadecenoate + reduced [NADPH--hemoprotein reductase] + O2 = (9Z)-16-hydroxyhexadec-9-enoate + oxidized [NADPH--hemoprotein reductase] + H2O + H(+). It carries out the reaction octadecanoate + reduced [NADPH--hemoprotein reductase] + O2 = 18-hydroxyoctadecanoate + oxidized [NADPH--hemoprotein reductase] + H2O + H(+). Catalyzes the terminal (at the omega-position) hydroxylation of a fatty acid. Probably involved in alkane metabolism. Linoleic acid is the preferred substrate, but it acts on various other C-16, C-18 and C-20 saturated and unsaturated fatty acids, namely palmitic, palmitoleic, stearic, oleic, alpha-linoleic, arachidonic and myristic acid. This Starmerella bombicola (Yeast) protein is Cytochrome P450 52-N1.